The sequence spans 480 residues: Glutamyl-tRNA(Gln) amidotransferase subunit A (480 aa).

Catalysis depends on charge relay system residues lysine 79 and serine 154. Residues 133 to 156 (NENSAYGPVRNPRDKSRVPGGSSG) are disordered. Serine 178 acts as the Acyl-ester intermediate in catalysis.

This sequence belongs to the amidase family. GatA subfamily. In terms of assembly, heterotrimer of A, B and C subunits.

It carries out the reaction L-glutamyl-tRNA(Gln) + L-glutamine + ATP + H2O = L-glutaminyl-tRNA(Gln) + L-glutamate + ADP + phosphate + H(+). Allows the formation of correctly charged Gln-tRNA(Gln) through the transamidation of misacylated Glu-tRNA(Gln) in organisms which lack glutaminyl-tRNA synthetase. The reaction takes place in the presence of glutamine and ATP through an activated gamma-phospho-Glu-tRNA(Gln). In Koribacter versatilis (strain Ellin345), this protein is Glutamyl-tRNA(Gln) amidotransferase subunit A.